The chain runs to 72 residues: Conotoxin Lt6.3 (72 aa).

The first 22 residues, 1 to 22 (MKLTSVVIVAVLFLAACQLTTS), serve as a signal peptide directing secretion. Positions 23–46 (DGSRGTWKDRAVRSITKVSMLRWP) are excised as a propeptide. Cystine bridges form between C47–C61, C54–C64, and C60–C71.

Belongs to the conotoxin O1 superfamily. In terms of tissue distribution, expressed by the venom duct.

It localises to the secreted. The chain is Conotoxin Lt6.3 from Conus litteratus (Lettered cone).